A 180-amino-acid polypeptide reads, in one-letter code: Putative manganese efflux pump MntP (180 aa).

6 consecutive transmembrane segments (helical) span residues 6–26 (LFALAVALGTDAFSLCIGIGI), 34–54 (IALISLTVLIFHILMPLLGWY), 67–87 (ASIAGALLLLYLGGKMIWDTI), 103–123 (GGLLLLSASVSMDALSVGFTL), 130–150 (LVLAAGVIGLVAGMMTFAGLT), and 159–179 (IGERAELVGGIILVGIGVKLF).

This sequence belongs to the MntP (TC 9.B.29) family.

It localises to the cell membrane. Probably functions as a manganese efflux pump. The chain is Putative manganese efflux pump MntP from Desulforamulus reducens (strain ATCC BAA-1160 / DSM 100696 / MI-1) (Desulfotomaculum reducens).